Consider the following 287-residue polypeptide: Phospholipase A and acyltransferase 5 (287 aa).

Disordered stretches follow at residues 48–72 and 86–138; these read PKQISRTASTESSDTQPTNDSASSQ and DRGL…SNQK. Composition is skewed to polar residues over residues 49 to 72 and 128 to 138; these read KQISRTASTESSDTQPTNDSASSQ and LKNQAAESNQK. The LRAT domain occupies 144–257; sequence LIEIFRIGYE…LRYGVPRSQQ (114 aa). Catalysis depends on residues histidine 154 and histidine 166. Cysteine 241 serves as the catalytic Acyl-thioester intermediate.

It belongs to the H-rev107 family. In terms of tissue distribution, expressed in testis.

It is found in the cytoplasm. The protein localises to the cytosol. The enzyme catalyses a 1,2-diacyl-sn-glycero-3-phosphocholine + H2O = a 1-acyl-sn-glycero-3-phosphocholine + a fatty acid + H(+). The catalysed reaction is a 1,2-diacyl-sn-glycero-3-phosphocholine + H2O = a 2-acyl-sn-glycero-3-phosphocholine + a fatty acid + H(+). It catalyses the reaction 1-hexadecanoyl-2-(5Z,8Z,11Z,14Z-eicosatetraenoyl)-sn-glycero-3-phosphocholine + 1,2-di-(9Z-octadecenoyl)-sn-glycero-3-phosphoethanolamine = N-(5Z,8Z,11Z,14Z-eicosatetraenoyl)-1,2-di-(9Z-octadecenoyl)-sn-glycero-3-phosphoethanolamine + 1-hexadecanoyl-sn-glycero-3-phosphocholine + H(+). It carries out the reaction 1,2-di-(9Z-octadecenoyl)-sn-glycero-3-phosphoethanolamine + 1,2-dihexadecanoyl-sn-glycero-3-phosphocholine = N-hexadecanoyl-1,2-di-(9Z-octadecenoyl)-sn-glycero-3-phosphoethanolamine + 1-hexadecanoyl-sn-glycero-3-phosphocholine + H(+). The enzyme catalyses 1,2-di-(9Z-octadecenoyl)-sn-glycero-3-phosphoethanolamine + 1,2-dihexadecanoyl-sn-glycero-3-phosphocholine = N-hexadecanoyl-1,2-di-(9Z-octadecenoyl)-sn-glycero-3-phosphoethanolamine + 2-hexadecanoyl-sn-glycero-3-phosphocholine + H(+). The catalysed reaction is a 1,2-diacyl-sn-glycero-3-phosphoethanolamine + a 1,2-diacyl-sn-glycero-3-phosphocholine = an N-acyl-1,2-diacyl-sn-glycero-3-phosphoethanolamine + a 1-acyl-sn-glycero-3-phosphocholine + H(+). It catalyses the reaction a 1,2-diacyl-sn-glycero-3-phosphoethanolamine + a 1,2-diacyl-sn-glycero-3-phosphocholine = an N-acyl-1,2-diacyl-sn-glycero-3-phosphoethanolamine + a 2-acyl-sn-glycero-3-phosphocholine + H(+). It carries out the reaction 1-hexadecanoyl-2-(9Z-octadecenoyl)-sn-glycero-3-phosphocholine + 1,2-di-(9Z-octadecenoyl)-sn-glycero-3-phosphoethanolamine = N,1,2-tri-(9Z-octadecenoyl)-sn-glycero-3-phosphoethanolamine + 1-hexadecanoyl-sn-glycero-3-phosphocholine + H(+). Functionally, exhibits both phospholipase A1/2 and acyltransferase activities. Shows phospholipase A1 (PLA1) and A2 (PLA2) activity, catalyzing the calcium-independent release of fatty acids from the sn-1 or sn-2 position of glycerophospholipids. Shows N-acyltransferase activity, catalyzing the calcium-independent transfer of a fatty acyl group at the sn-1 position of phosphatidylcholine (PC) and other glycerophospholipids to the primary amine of phosphatidylethanolamine (PE), forming N-acylphosphatidylethanolamine (NAPE), which serves as precursor for N-acylethanolamines (NAEs). This Rattus norvegicus (Rat) protein is Phospholipase A and acyltransferase 5.